The chain runs to 142 residues: Type II secretion system core protein G (142 aa).

A propeptide spans 1 to 8 (MRRQSQRG) (leader sequence). Phe-9 carries the N-methylphenylalanine modification. A helical transmembrane segment spans residues 9 to 29 (FTLLEIMVVIVIMGILASLVV). A disordered region spans residues 122-142 (SGQDGVPGTDDDIGNWTLSKK).

It belongs to the GSP G family. As to quaternary structure, type II secretion system is composed of four main components: the outer membrane complex, the inner membrane complex, the cytoplasmic secretion ATPase and the periplasm-spanning pseudopilus. Forms homomultimers. Post-translationally, cleaved by the prepilin peptidase. Methylated by prepilin peptidase at the amino group of the N-terminal phenylalanine once the leader sequence is cleaved.

The protein resides in the cell inner membrane. In terms of biological role, core component of the type II secretion system required for the energy-dependent secretion of extracellular factors such as proteases and toxins from the periplasm. Pseudopilin (pilin-like) protein that polymerizes to form the pseudopilus. Further polymerization triggers pseudopilus growth. The protein is Type II secretion system core protein G of Klebsiella michiganensis (strain ATCC 8724 / DSM 4798 / JCM 20051 / NBRC 3318 / NRRL B-199 / KCTC 1686 / BUCSAV 143 / CCM 1901).